The chain runs to 445 residues: Glucose-6-phosphate isomerase (445 aa).

Catalysis depends on glutamate 284, which acts as the Proton donor. Active-site residues include histidine 305 and lysine 419.

The protein belongs to the GPI family.

It is found in the cytoplasm. It catalyses the reaction alpha-D-glucose 6-phosphate = beta-D-fructose 6-phosphate. The protein operates within carbohydrate biosynthesis; gluconeogenesis. It participates in carbohydrate degradation; glycolysis; D-glyceraldehyde 3-phosphate and glycerone phosphate from D-glucose: step 2/4. Catalyzes the reversible isomerization of glucose-6-phosphate to fructose-6-phosphate. This chain is Glucose-6-phosphate isomerase, found in Leptospira borgpetersenii serovar Hardjo-bovis (strain JB197).